Reading from the N-terminus, the 117-residue chain is Basic phospholipase A2 pseudexin B chain (117 aa).

Cystine bridges form between Cys-11/Cys-71, Cys-27/Cys-117, Cys-29/Cys-45, Cys-44/Cys-98, Cys-51/Cys-91, Cys-60/Cys-84, and Cys-78/Cys-89. Ca(2+) contacts are provided by Tyr-28, Gly-30, and Gly-32. His-48 is a catalytic residue. Asp-49 provides a ligand contact to Ca(2+). Asp-92 is a catalytic residue.

Belongs to the phospholipase A2 family. Group I subfamily. D49 sub-subfamily. Requires Ca(2+) as cofactor. Expressed by the venom gland.

The protein localises to the secreted. It carries out the reaction a 1,2-diacyl-sn-glycero-3-phosphocholine + H2O = a 1-acyl-sn-glycero-3-phosphocholine + a fatty acid + H(+). PLA2 catalyzes the calcium-dependent hydrolysis of the 2-acyl groups in 3-sn-phosphoglycerides. This chain is Basic phospholipase A2 pseudexin B chain, found in Pseudechis porphyriacus (Red-bellied black snake).